The sequence spans 269 residues: Expansin-B1 (269 aa).

An N-terminal signal peptide occupies residues 1–24 (MGSLANNIMVVGAVLAALVAGGSC). The N-linked (GlcNAc...) asparagine glycan is linked to asparagine 34. The Expansin-like EG45 domain maps to 63–169 (GGACGIKNVN…RRVRCKYPAG (107 aa)). 3 disulfide bridges follow: cysteine 66/cysteine 94, cysteine 97/cysteine 164, and cysteine 102/cysteine 108. The region spanning 183-264 (NYLAVLVKYV…NWRPDAVYTS (82 aa)) is the Expansin-like CBD domain.

It belongs to the expansin family. Expansin B subfamily. In terms of tissue distribution, expressed in anthers and pollen.

It localises to the secreted. Its subcellular location is the cell wall. It is found in the membrane. In terms of biological role, may aid fertilization by loosening the cell wall of the stigma and style, thereby facilitating penetration of the pollen tube. Acts selectively on grass cell walls, which are relatively poor in pectins and xyloglucans and rich in glucuronoarabinoxylans and (1-3),(1-4)-beta-D-glucans, when compared with cell walls of other angiosperms, including other monocots. The protein is Expansin-B1 (EXPB1) of Zea mays (Maize).